A 310-amino-acid polypeptide reads, in one-letter code: Alpha/beta hydrolase domain-containing protein 17C (310 aa).

Residues S192, D257, and H286 each act as charge relay system in the active site.

This sequence belongs to the AB hydrolase superfamily. ABHD17 family. Post-translationally, palmitoylated on cysteine residues located in a cysteine cluster at the N-terminus which promotes membrane localization.

It localises to the recycling endosome membrane. Its subcellular location is the cell projection. It is found in the dendritic spine. The protein resides in the postsynaptic density membrane. It carries out the reaction S-hexadecanoyl-L-cysteinyl-[protein] + H2O = L-cysteinyl-[protein] + hexadecanoate + H(+). Functionally, hydrolyzes fatty acids from S-acylated cysteine residues in proteins. This is Alpha/beta hydrolase domain-containing protein 17C from Xenopus tropicalis (Western clawed frog).